Here is a 235-residue protein sequence, read N- to C-terminus: uncharacterized protein (235 aa).

The ABC transporter domain maps to 2-235; the sequence is IKLKNVTKTY…EEKLRGFDDR (234 aa). Position 38–45 (38–45) interacts with ATP; sequence GPSGSGKS.

The protein belongs to the ABC transporter superfamily.

This is an uncharacterized protein from Methanocaldococcus jannaschii (strain ATCC 43067 / DSM 2661 / JAL-1 / JCM 10045 / NBRC 100440) (Methanococcus jannaschii).